A 420-amino-acid polypeptide reads, in one-letter code: 3-phosphoshikimate 1-carboxyvinyltransferase (420 aa).

Positions 1–24 (MTRTAKLTIIPPGRPLSGRAMPPG) are disordered. Residues K26, S27, and R31 each coordinate 3-phosphoshikimate. K26 serves as a coordination point for phosphoenolpyruvate. Phosphoenolpyruvate-binding residues include G97 and R125. The 3-phosphoshikimate site is built by S170, S171, Q172, D297, N320, and K324. Q172 is a binding site for phosphoenolpyruvate. Residue D297 is the Proton acceptor of the active site. Phosphoenolpyruvate-binding residues include R328, R375, and K400.

Belongs to the EPSP synthase family. In terms of assembly, monomer.

The protein localises to the cytoplasm. The catalysed reaction is 3-phosphoshikimate + phosphoenolpyruvate = 5-O-(1-carboxyvinyl)-3-phosphoshikimate + phosphate. It functions in the pathway metabolic intermediate biosynthesis; chorismate biosynthesis; chorismate from D-erythrose 4-phosphate and phosphoenolpyruvate: step 6/7. Functionally, catalyzes the transfer of the enolpyruvyl moiety of phosphoenolpyruvate (PEP) to the 5-hydroxyl of shikimate-3-phosphate (S3P) to produce enolpyruvyl shikimate-3-phosphate and inorganic phosphate. This Rhizobium etli (strain CIAT 652) protein is 3-phosphoshikimate 1-carboxyvinyltransferase.